A 443-amino-acid polypeptide reads, in one-letter code: 26S proteasome regulatory subunit 4 homolog A (443 aa).

Disordered regions lie at residues 1-55 (MGQG…LPTV) and 87-108 (RLKPQEEKAEEDRSKVDDLRGT). 2 stretches are compositionally biased toward basic and acidic residues: residues 12–28 (QGDRKPDGGDKKEKKFE) and 87–106 (RLKPQEEKAEEDRSKVDDLR). 229 to 236 (GEPGTGKT) is an ATP binding site. Residues Lys-296 and Lys-433 each participate in a glycyl lysine isopeptide (Lys-Gly) (interchain with G-Cter in ubiquitin) cross-link.

It belongs to the AAA ATPase family. As to quaternary structure, component of the 19S regulatory particle (RP/PA700) base subcomplex of the 26S proteasome. The 26S proteasome is composed of a core protease (CP), known as the 20S proteasome, capped at one or both ends by the 19S regulatory particle (RP/PA700). The RP/PA700 complex is composed of at least 17 different subunits in two subcomplexes, the base and the lid, which form the portions proximal and distal to the 20S proteolytic core, respectively. Required for innate immunity. Interacts with UNI. As to expression, preferentially expressed in the root and shoot apical meristem.

It is found in the cytoplasm. Its subcellular location is the P-body. It localises to the nucleus. The 26S protease is involved in the ATP-dependent degradation of ubiquitinated proteins. The regulatory (or ATPase) complex confers ATP dependency and substrate specificity to the 26S complex. Interacts with transit peptides of proteins targeted to the chloroplast, and may be involved in the degradation of unimported plastid protein precursors. Is required for the maintenance of postembryonic root and shoot meristems. Has a specific role in the regulation of organs size. Acts redundantly with RPT2B in the regulation of gametogenesis. With RPT2B plays a critical role in 26S proteasome assembly. Acts as an upstream signaling component for inducing both defense and morphological phenotypes in the constitutive active uni-1D mutant. Acts as a negative regulator of endoreduplication in trichome cells. May function after the completion of the third endoreduplication step (8C to 16C) mediated by RHL1. Acts as a negative regulator of transcriptional gene silencing (TGS) at specific endogenous genes through DNA methylation. Promotes post-transcriptional gene silencing (PTGS) by limiting the degradation of transgene aberrant RNAs by the RNA quality control (RQC) machinery, thus favoring their entry into cytoplasmic siRNA bodies where they can trigger PTGS. Involved in tolerance to zinc deficiency, possibly through alleviation of oxidative stresses or processing of poly-ubiquitinated proteins. Required for resistance to the fungal pathogen Golovinomyces cichoracearum. The chain is 26S proteasome regulatory subunit 4 homolog A from Arabidopsis thaliana (Mouse-ear cress).